Consider the following 387-residue polypeptide: 1-deoxy-D-xylulose 5-phosphate reductoisomerase (387 aa).

Residues threonine 10, glycine 11, serine 12, valine 13, asparagine 38, and asparagine 119 each coordinate NADPH. Lysine 120 provides a ligand contact to 1-deoxy-D-xylulose 5-phosphate. Glutamate 121 provides a ligand contact to NADPH. Residue aspartate 145 participates in Mn(2+) binding. 1-deoxy-D-xylulose 5-phosphate is bound by residues serine 146, glutamate 147, serine 170, and histidine 193. Glutamate 147 provides a ligand contact to Mn(2+). Glycine 199 contacts NADPH. Positions 206, 211, 212, and 215 each coordinate 1-deoxy-D-xylulose 5-phosphate. Glutamate 215 contributes to the Mn(2+) binding site.

The protein belongs to the DXR family. It depends on Mg(2+) as a cofactor. Mn(2+) is required as a cofactor.

It catalyses the reaction 2-C-methyl-D-erythritol 4-phosphate + NADP(+) = 1-deoxy-D-xylulose 5-phosphate + NADPH + H(+). The protein operates within isoprenoid biosynthesis; isopentenyl diphosphate biosynthesis via DXP pathway; isopentenyl diphosphate from 1-deoxy-D-xylulose 5-phosphate: step 1/6. Functionally, catalyzes the NADPH-dependent rearrangement and reduction of 1-deoxy-D-xylulose-5-phosphate (DXP) to 2-C-methyl-D-erythritol 4-phosphate (MEP). This is 1-deoxy-D-xylulose 5-phosphate reductoisomerase from Wolbachia sp. subsp. Drosophila simulans (strain wRi).